We begin with the raw amino-acid sequence, 141 residues long: Large ribosomal subunit protein uL11 (141 aa).

Belongs to the universal ribosomal protein uL11 family. Part of the ribosomal stalk of the 50S ribosomal subunit. Interacts with L10 and the large rRNA to form the base of the stalk. L10 forms an elongated spine to which L12 dimers bind in a sequential fashion forming a multimeric L10(L12)X complex. In terms of processing, one or more lysine residues are methylated.

Forms part of the ribosomal stalk which helps the ribosome interact with GTP-bound translation factors. This chain is Large ribosomal subunit protein uL11, found in Chlamydia abortus (strain DSM 27085 / S26/3) (Chlamydophila abortus).